The primary structure comprises 1939 residues: Myosin heavy chain, skeletal muscle, adult (1939 aa).

Ala-2 bears the N-acetylalanine mark. Positions 34 to 83 (DAKSSVFVVHPKESFVKGTIQSKEGGKVTVKTEGGETLTVKEDQVFSMNP) constitute a Myosin N-terminal SH3-like domain. Lys-36 is modified (N6-methyllysine). A Myosin motor domain is found at 87-781 (DKIEDMAMMT…LLGLLEEMRD (695 aa)). The residue at position 131 (Lys-131) is an N6,N6,N6-trimethyllysine. 180–187 (GESGAGKT) contributes to the ATP binding site. Lys-552 carries the N6,N6,N6-trimethyllysine modification. The interval 658 to 680 (LNKLMANLRSTHPHFVRCIIPNE) is actin-binding. Residue His-756 is modified to Pros-methylhistidine. The segment at 760–774 (RFGHTKVFFKAGLLG) is actin-binding. Residues 784-813 (LAEIITRTQARCRGFLMRVEYRRMVERRES) form the IQ domain. Residues 839-841 (IKP) form a hinge region. Residues 842–1939 (LLKSAESEKE…IHGKKIEEEE (1098 aa)) are a coiled coil.

The protein belongs to the TRAFAC class myosin-kinesin ATPase superfamily. Myosin family. Muscle myosin is a hexameric protein that consists of 2 heavy chain subunits (MHC), 2 alkali light chain subunits (MLC) and 2 regulatory light chain subunits (MLC-2).

It is found in the cytoplasm. Its subcellular location is the myofibril. Its function is as follows. Muscle contraction. Myosin is a protein that binds to F-actin and has ATPase activity that is activated by F-actin. The protein is Myosin heavy chain, skeletal muscle, adult of Gallus gallus (Chicken).